The chain runs to 410 residues: Diguanylate cyclase DgcM (410 aa).

PAS domains follow at residues 3 to 70 (THNF…NQHD) and 129 to 198 (GFYA…HLPG). In terms of domain architecture, PAC spans 199–251 (GHKPLNFIHKLADGSTRHVQTYAGPIEIYGDKLMLCIVHDITEQKRLEEQLEH). The region spanning 283–410 (QDYSLLLIDT…NDGRNRVLAA (128 aa)) is the GGDEF domain. Mg(2+) is bound at residue Asp291. Substrate contacts are provided by Asn299, His304, and Asp308. A Mg(2+)-binding site is contributed by Glu334. Glu334 serves as the catalytic Proton acceptor.

Mg(2+) serves as cofactor.

It carries out the reaction 2 GTP = 3',3'-c-di-GMP + 2 diphosphate. It participates in purine metabolism; 3',5'-cyclic di-GMP biosynthesis. Its function is as follows. Part of a signaling cascade that regulates curli biosynthesis. The cascade is composed of two cyclic-di-GMP (c-di-GMP) control modules, in which c-di-GMP controlled by the DgcE/PdeH pair (module I) regulates the activity of the DgcM/PdeR pair (module II), which in turn regulates activity of the transcription factor MlrA and expression of the master biofilm regulator csgD. The sequence is that of Diguanylate cyclase DgcM from Escherichia coli O157:H7.